The primary structure comprises 134 residues: Small ribosomal subunit protein uS8c (134 aa).

Belongs to the universal ribosomal protein uS8 family. Part of the 30S ribosomal subunit.

It localises to the plastid. The protein localises to the chloroplast. One of the primary rRNA binding proteins, it binds directly to 16S rRNA central domain where it helps coordinate assembly of the platform of the 30S subunit. This chain is Small ribosomal subunit protein uS8c (rps8), found in Eucalyptus globulus subsp. globulus (Tasmanian blue gum).